A 46-amino-acid polypeptide reads, in one-letter code: Endochitinase 4 (46 aa).

The protein belongs to the glycosyl hydrolase 19 family. Chitinase class I subfamily.

The enzyme catalyses Random endo-hydrolysis of N-acetyl-beta-D-glucosaminide (1-&gt;4)-beta-linkages in chitin and chitodextrins.. Defense against chitin-containing fungal and bacterial pathogens. The sequence is that of Endochitinase 4 from Arachis hypogaea (Peanut).